A 454-amino-acid chain; its full sequence is Carbamoyl phosphate synthase arginine-specific small chain (454 aa).

The transit peptide at 1 to 29 directs the protein to the mitochondrion; the sequence is MMFSRFFKAVPARAPAFSSPLPVYQARTM. Positions 219–406 constitute a Glutamine amidotransferase type-1 domain; it reads HVAVLDCGVK…IDSVKKYKNS (188 aa). Cys295 functions as the Nucleophile in the catalytic mechanism. Residues His379 and Glu381 contribute to the active site.

It belongs to the CarA family. Heterodimer composed of 2 chains; the small (or glutamine) chain promotes the hydrolysis of glutamine to ammonia, which is used by the large (or ammonia) chain to synthesize carbamoyl phosphate.

It is found in the mitochondrion matrix. It catalyses the reaction hydrogencarbonate + L-glutamine + 2 ATP + H2O = carbamoyl phosphate + L-glutamate + 2 ADP + phosphate + 2 H(+). The catalysed reaction is L-glutamine + H2O = L-glutamate + NH4(+). The protein operates within amino-acid biosynthesis; L-arginine biosynthesis; carbamoyl phosphate from bicarbonate: step 1/1. Small subunit of the arginine-specific carbamoyl phosphate synthase (CPSase). CPSase catalyzes the formation of carbamoyl phosphate from the ammonia moiety of glutamine, carbonate, and phosphate donated by ATP, the first step of the arginine biosynthetic pathway. The small subunit (glutamine amidotransferase) binds and cleaves glutamine to supply the large subunit with the substrate ammonia. In Emericella nidulans (strain FGSC A4 / ATCC 38163 / CBS 112.46 / NRRL 194 / M139) (Aspergillus nidulans), this protein is Carbamoyl phosphate synthase arginine-specific small chain (cpa-1).